Here is a 330-residue protein sequence, read N- to C-terminus: LIM domain-containing protein pin-2 (330 aa).

5 LIM zinc-binding domains span residues cysteine 21 to aspartate 73, cysteine 82 to cysteine 132, cysteine 144 to cysteine 194, cysteine 202 to aspartate 255, and cysteine 264 to cysteine 315.

Expressed in neurons and intestine.

Its subcellular location is the cytoplasm. The protein resides in the nucleus. This chain is LIM domain-containing protein pin-2 (pin-2), found in Caenorhabditis elegans.